Here is a 337-residue protein sequence, read N- to C-terminus: Phosphoribosylformylglycinamidine cyclo-ligase (337 aa).

It belongs to the AIR synthase family.

It localises to the cytoplasm. It carries out the reaction 2-formamido-N(1)-(5-O-phospho-beta-D-ribosyl)acetamidine + ATP = 5-amino-1-(5-phospho-beta-D-ribosyl)imidazole + ADP + phosphate + H(+). It functions in the pathway purine metabolism; IMP biosynthesis via de novo pathway; 5-amino-1-(5-phospho-D-ribosyl)imidazole from N(2)-formyl-N(1)-(5-phospho-D-ribosyl)glycinamide: step 2/2. The protein is Phosphoribosylformylglycinamidine cyclo-ligase of Pseudothermotoga lettingae (strain ATCC BAA-301 / DSM 14385 / NBRC 107922 / TMO) (Thermotoga lettingae).